The chain runs to 195 residues: dITP/XTP pyrophosphatase (195 aa).

8–13 (TNNQGK) lines the substrate pocket. 2 residues coordinate Mg(2+): glutamate 39 and aspartate 68. The active-site Proton acceptor is the aspartate 68. Residues serine 69, 149–152 (FGYD), lysine 172, and 177–178 (HR) contribute to the substrate site.

This sequence belongs to the HAM1 NTPase family. As to quaternary structure, homodimer. Mg(2+) is required as a cofactor.

It carries out the reaction XTP + H2O = XMP + diphosphate + H(+). The catalysed reaction is dITP + H2O = dIMP + diphosphate + H(+). The enzyme catalyses ITP + H2O = IMP + diphosphate + H(+). Its function is as follows. Pyrophosphatase that catalyzes the hydrolysis of nucleoside triphosphates to their monophosphate derivatives, with a high preference for the non-canonical purine nucleotides XTP (xanthosine triphosphate), dITP (deoxyinosine triphosphate) and ITP. Seems to function as a house-cleaning enzyme that removes non-canonical purine nucleotides from the nucleotide pool, thus preventing their incorporation into DNA/RNA and avoiding chromosomal lesions. The sequence is that of dITP/XTP pyrophosphatase from Staphylococcus epidermidis (strain ATCC 35984 / DSM 28319 / BCRC 17069 / CCUG 31568 / BM 3577 / RP62A).